The sequence spans 248 residues: tRNA (guanine-N(1)-)-methyltransferase (248 aa).

S-adenosyl-L-methionine-binding positions include glycine 113 and 133–138; that span reads IGDYVL.

It belongs to the RNA methyltransferase TrmD family. As to quaternary structure, homodimer.

The protein resides in the cytoplasm. The enzyme catalyses guanosine(37) in tRNA + S-adenosyl-L-methionine = N(1)-methylguanosine(37) in tRNA + S-adenosyl-L-homocysteine + H(+). Specifically methylates guanosine-37 in various tRNAs. This is tRNA (guanine-N(1)-)-methyltransferase from Shewanella denitrificans (strain OS217 / ATCC BAA-1090 / DSM 15013).